A 225-amino-acid chain; its full sequence is Platelet-activating factor acetylhydrolase IB subunit beta homolog (225 aa).

It belongs to the 'GDSL' lipolytic enzyme family. Platelet-activating factor acetylhydrolase IB beta/gamma subunits subfamily. Does not interact with Lis-1.

The polypeptide is Platelet-activating factor acetylhydrolase IB subunit beta homolog (Paf-AHalpha) (Drosophila melanogaster (Fruit fly)).